The chain runs to 338 residues: Aspartate-semialdehyde dehydrogenase (338 aa).

NADP(+) contacts are provided by residues 9–12 (TGQV) and 37–38 (RS). R93 is a phosphate binding site. The Acyl-thioester intermediate role is filled by C123. Q150 is a binding site for substrate. An NADP(+)-binding site is contributed by 153–154 (SG). K220 provides a ligand contact to phosphate. R242 is a binding site for substrate. Residue H249 is the Proton acceptor of the active site. Position 316 (N316) interacts with NADP(+).

The protein belongs to the aspartate-semialdehyde dehydrogenase family. In terms of assembly, homodimer.

It catalyses the reaction L-aspartate 4-semialdehyde + phosphate + NADP(+) = 4-phospho-L-aspartate + NADPH + H(+). The protein operates within amino-acid biosynthesis; L-lysine biosynthesis via DAP pathway; (S)-tetrahydrodipicolinate from L-aspartate: step 2/4. It participates in amino-acid biosynthesis; L-methionine biosynthesis via de novo pathway; L-homoserine from L-aspartate: step 2/3. Its pathway is amino-acid biosynthesis; L-threonine biosynthesis; L-threonine from L-aspartate: step 2/5. In terms of biological role, catalyzes the NADPH-dependent formation of L-aspartate-semialdehyde (L-ASA) by the reductive dephosphorylation of L-aspartyl-4-phosphate. The chain is Aspartate-semialdehyde dehydrogenase from Streptomyces akiyoshiensis.